A 314-amino-acid polypeptide reads, in one-letter code: GTPase Era (314 aa).

One can recognise an Era-type G domain in the interval 21-189; sequence KSGFVGIIGR…QKTLINLLEP (169 aa). The tract at residues 29–36 is G1; that stretch reads GRPNVGKS. 29-36 lines the GTP pocket; the sequence is GRPNVGKS. The G2 stretch occupies residues 55-59; sequence QTTRN. The segment at 76-79 is G3; that stretch reads DTPG. Residues 76–80 and 138–141 each bind GTP; these read DTPGI and NKSD. Residues 138–141 are G4; the sequence is NKSD. The G5 stretch occupies residues 168–170; that stretch reads FSA. A KH type-2 domain is found at 212 to 296; sequence IREQILQQTR…YLQLFVKVEP (85 aa).

The protein belongs to the TRAFAC class TrmE-Era-EngA-EngB-Septin-like GTPase superfamily. Era GTPase family. Monomer.

Its subcellular location is the cytoplasm. The protein localises to the cell inner membrane. In terms of biological role, an essential GTPase that binds both GDP and GTP, with rapid nucleotide exchange. Plays a role in 16S rRNA processing and 30S ribosomal subunit biogenesis and possibly also in cell cycle regulation and energy metabolism. The sequence is that of GTPase Era from Rippkaea orientalis (strain PCC 8801 / RF-1) (Cyanothece sp. (strain PCC 8801)).